A 934-amino-acid chain; its full sequence is Bifunctional uridylyltransferase/uridylyl-removing enzyme (934 aa).

The tract at residues 1–379 is uridylyltransferase; it reads MSAHDLKLEE…TFSRRKRKLS (379 aa). Residues 380–736 form a uridylyl-removing region; it reads DDGAFISENH…AKPHAFEAVT (357 aa). An HD domain is found at 496-613; the sequence is VDEHLLRCIA…IDFADTVQTM (118 aa). 2 consecutive ACT domains span residues 737-818 and 848-931; these read EITV…DMLA and VIEV…RSPQ.

It belongs to the GlnD family. Mg(2+) is required as a cofactor.

It catalyses the reaction [protein-PII]-L-tyrosine + UTP = [protein-PII]-uridylyl-L-tyrosine + diphosphate. The enzyme catalyses [protein-PII]-uridylyl-L-tyrosine + H2O = [protein-PII]-L-tyrosine + UMP + H(+). Uridylyltransferase (UTase) activity is inhibited by glutamine, while glutamine activates uridylyl-removing (UR) activity. Functionally, modifies, by uridylylation and deuridylylation, the PII regulatory proteins (GlnB and homologs), in response to the nitrogen status of the cell that GlnD senses through the glutamine level. Under low glutamine levels, catalyzes the conversion of the PII proteins and UTP to PII-UMP and PPi, while under higher glutamine levels, GlnD hydrolyzes PII-UMP to PII and UMP (deuridylylation). Thus, controls uridylylation state and activity of the PII proteins, and plays an important role in the regulation of nitrogen assimilation and metabolism. The protein is Bifunctional uridylyltransferase/uridylyl-removing enzyme of Brucella suis biovar 1 (strain 1330).